The chain runs to 410 residues: E3 ubiquitin-protein ligase MARCHF4 (410 aa).

The signal sequence occupies residues 1-18 (MLMPLCGLLWWWWCCCSG). The interval 92–136 (GPREVVGREPPPVPPPPPLPPSSVEDDWGGPATEPPASLLSSASS) is disordered. The segment covering 100 to 112 (EPPPVPPPPPLPP) has biased composition (pro residues). Over residues 126 to 136 (PPASLLSSASS) the composition is skewed to low complexity. The RING-CH-type zinc finger occupies 155–215 (DSGMRTPLCR…ELCYYKYHVI (61 aa)). Zn(2+)-binding residues include Cys163, Cys166, Cys179, Cys181, His189, Cys192, Cys205, and Cys208. A run of 2 helical transmembrane segments spans residues 238-258 (VAAAILGSLFLIASISWLIWS) and 272-292 (LFQICYGMYGFMDVVCIGLII). Disordered regions lie at residues 324–372 (EDQK…SGPL) and 390–410 (PHEQRSPPGSSRELVMRVTTV). A compositionally biased stretch (polar residues) spans 333–346 (NPRTSSSTQANIPS). A compositionally biased stretch (low complexity) spans 352-366 (AGTPAPEQGPAQAAG).

Expressed in brain and placenta.

The protein localises to the golgi apparatus membrane. The enzyme catalyses S-ubiquitinyl-[E2 ubiquitin-conjugating enzyme]-L-cysteine + [acceptor protein]-L-lysine = [E2 ubiquitin-conjugating enzyme]-L-cysteine + N(6)-ubiquitinyl-[acceptor protein]-L-lysine.. Its pathway is protein modification; protein ubiquitination. Functionally, E3 ubiquitin-protein ligase that may mediate ubiquitination of MHC-I and CD4, and promote their subsequent endocytosis and sorting to lysosomes via multivesicular bodies. E3 ubiquitin ligases accept ubiquitin from an E2 ubiquitin-conjugating enzyme in the form of a thioester and then directly transfer the ubiquitin to targeted substrates. This is E3 ubiquitin-protein ligase MARCHF4 from Homo sapiens (Human).